The primary structure comprises 272 residues: Cell division protein FtsQ (272 aa).

At 1 to 43 (MEYNPPNTRERIAARRQRLRQPSSEPAIPGWRRRFIDGLQSGR) the chain is on the cytoplasmic side. The helical transmembrane segment at 44–64 (IVSGAVFVVSCLALFYVLFSS) threads the bilayer. Residues 65-272 (QFRVQTVEVV…FYQNRTDGRS (208 aa)) are Extracellular-facing. In terms of domain architecture, POTRA spans 66-133 (FRVQTVEVVG…DRARIVIVER (68 aa)).

This sequence belongs to the FtsQ/DivIB family. FtsQ subfamily.

It is found in the cell membrane. In terms of biological role, essential cell division protein. The sequence is that of Cell division protein FtsQ from Chloroflexus aggregans (strain MD-66 / DSM 9485).